The chain runs to 278 residues: Adenosylcobinamide-GDP ribazoletransferase (278 aa).

7 consecutive transmembrane segments (helical) span residues 35-55 (VVGIIVGFILLFFCIIFNFIL), 62-82 (AVLPLMIIVVILTDLITTGAL), 116-136 (GALALILYFLLKFILLFSLTI), 141-161 (AAVYAIITYPVVSRFCSVVSC), 185-205 (LIVATVITLLYTIGMLFMPFI), 222-242 (LIIVIIVGLLALFAFAFSKLI), and 257-277 (LLEISSLVYIFLFLVIPTFFI).

Belongs to the CobS family. Requires Mg(2+) as cofactor.

It is found in the cell inner membrane. The enzyme catalyses alpha-ribazole + adenosylcob(III)inamide-GDP = adenosylcob(III)alamin + GMP + H(+). It catalyses the reaction alpha-ribazole 5'-phosphate + adenosylcob(III)inamide-GDP = adenosylcob(III)alamin 5'-phosphate + GMP + H(+). Its pathway is cofactor biosynthesis; adenosylcobalamin biosynthesis; adenosylcobalamin from cob(II)yrinate a,c-diamide: step 7/7. In terms of biological role, joins adenosylcobinamide-GDP and alpha-ribazole to generate adenosylcobalamin (Ado-cobalamin). Also synthesizes adenosylcobalamin 5'-phosphate from adenosylcobinamide-GDP and alpha-ribazole 5'-phosphate. The protein is Adenosylcobinamide-GDP ribazoletransferase of Fusobacterium nucleatum subsp. nucleatum (strain ATCC 25586 / DSM 15643 / BCRC 10681 / CIP 101130 / JCM 8532 / KCTC 2640 / LMG 13131 / VPI 4355).